A 260-amino-acid polypeptide reads, in one-letter code: 14-3-3-like protein (260 aa).

This sequence belongs to the 14-3-3 family.

The protein is 14-3-3-like protein of Pisum sativum (Garden pea).